A 103-amino-acid polypeptide reads, in one-letter code: Methanol dehydrogenase [cytochrome c] subunit 2 (103 aa).

A signal peptide spans 1 to 20 (MKRILTLTVAALALGTPALA). An intrachain disulfide couples C26 to C32.

The protein belongs to the methanol dehydrogenase subunit 2 family. Heterotetramer composed of 2 alpha and 2 beta subunits.

It localises to the periplasm. The enzyme catalyses 2 Fe(III)-[cytochrome cL] + a primary alcohol = 2 Fe(II)-[cytochrome cL] + an aldehyde + 2 H(+). Functionally, catalyzes the oxidation of primary alcohols including methanol. In Paracoccus denitrificans, this protein is Methanol dehydrogenase [cytochrome c] subunit 2 (moxI).